Reading from the N-terminus, the 88-residue chain is Insulin-related peptide 4 (88 aa).

The signal sequence occupies residues 1–19 (MKLTLIILLVVAYSWCSEA). The propeptide occupies 20-45 (QNEARVFCGRVLSERLAALCWGPNSV). Residue Arg65 is modified to Arginine amide. Residues 69 to 88 (GLATECCDKACTVEELLSYC) constitute a propeptide that is removed on maturation.

It belongs to the insulin family. In terms of tissue distribution, DAGWWLTRGAARSLGGVR-amide: Expressed in corpora cardiaca (CC), corpora allata (CA), antennal lobe (AL) and gnathal ganglion (GNG) (at protein level). Expression in CC and CA detected in most animals, in AL and GNG in few animals (at protein level).

The protein resides in the secreted. The protein is Insulin-related peptide 4 of Agrotis ipsilon (Black cutworm moth).